The following is a 428-amino-acid chain: Diaminopimelate decarboxylase (428 aa).

At lysine 64 the chain carries N6-(pyridoxal phosphate)lysine. Residues glycine 239 and 281–284 (EPGR) each bind pyridoxal 5'-phosphate. 3 residues coordinate substrate: arginine 284, arginine 319, and tyrosine 323. Cysteine 350 (proton donor) is an active-site residue. Residues glutamate 351 and tyrosine 379 each contribute to the substrate site. Tyrosine 379 is a binding site for pyridoxal 5'-phosphate.

The protein belongs to the Orn/Lys/Arg decarboxylase class-II family. LysA subfamily. As to quaternary structure, homodimer. Pyridoxal 5'-phosphate serves as cofactor.

The enzyme catalyses meso-2,6-diaminopimelate + H(+) = L-lysine + CO2. Its pathway is amino-acid biosynthesis; L-lysine biosynthesis via DAP pathway; L-lysine from DL-2,6-diaminopimelate: step 1/1. Functionally, specifically catalyzes the decarboxylation of meso-diaminopimelate (meso-DAP) to L-lysine. The protein is Diaminopimelate decarboxylase of Methanothermobacter thermautotrophicus (strain ATCC 29096 / DSM 1053 / JCM 10044 / NBRC 100330 / Delta H) (Methanobacterium thermoautotrophicum).